Reading from the N-terminus, the 353-residue chain is RNA 3'-terminal phosphate cyclase (353 aa).

Residues Q100 and 289–292 contribute to the ATP site; that span reads HMSD. H315 (tele-AMP-histidine intermediate) is an active-site residue.

It belongs to the RNA 3'-terminal cyclase family. Type 1 subfamily.

It localises to the cytoplasm. It catalyses the reaction a 3'-end 3'-phospho-ribonucleotide-RNA + ATP = a 3'-end 2',3'-cyclophospho-ribonucleotide-RNA + AMP + diphosphate. Functionally, catalyzes the conversion of 3'-phosphate to a 2',3'-cyclic phosphodiester at the end of RNA. The mechanism of action of the enzyme occurs in 3 steps: (A) adenylation of the enzyme by ATP; (B) transfer of adenylate to an RNA-N3'P to produce RNA-N3'PP5'A; (C) and attack of the adjacent 2'-hydroxyl on the 3'-phosphorus in the diester linkage to produce the cyclic end product. The biological role of this enzyme is unknown but it is likely to function in some aspects of cellular RNA processing. This chain is RNA 3'-terminal phosphate cyclase, found in Ignicoccus hospitalis (strain KIN4/I / DSM 18386 / JCM 14125).